Consider the following 71-residue polypeptide: MPAVKVKENEPFDVALRRFKRSCEKAGVLAEVRSREFYEKPTAERKRKAAAAVKRHAKKVQREQRRAVRLY.

A compositionally biased stretch (basic residues) spans alanine 50–lysine 59. The segment at alanine 50–tyrosine 71 is disordered. Residues valine 60 to tyrosine 71 are compositionally biased toward basic and acidic residues.

This sequence belongs to the bacterial ribosomal protein bS21 family.

This Pseudomonas entomophila (strain L48) protein is Small ribosomal subunit protein bS21.